The sequence spans 198 residues: Recombination protein RecR (198 aa).

The C4-type zinc finger occupies 58 to 73 (CSICGNYTDSDPCAIC). The region spanning 81-175 (SIICVIEQPK…KVTRIAHGVP (95 aa)) is the Toprim domain.

The protein belongs to the RecR family.

Its function is as follows. May play a role in DNA repair. It seems to be involved in an RecBC-independent recombinational process of DNA repair. It may act with RecF and RecO. The sequence is that of Recombination protein RecR from Clostridium novyi (strain NT).